Consider the following 117-residue polypeptide: Non-specific lipid-transfer protein Lac s 1 (117 aa).

Residues methionine 1–alanine 25 form the signal peptide. Disulfide bonds link cysteine 29-cysteine 76, cysteine 39-cysteine 53, cysteine 54-cysteine 99, and cysteine 74-cysteine 113.

Belongs to the plant LTP family.

In terms of biological role, plant non-specific lipid-transfer proteins transfer phospholipids as well as galactolipids across membranes. May play a role in wax or cutin deposition in the cell walls of expanding epidermal cells and certain secretory tissues. The sequence is that of Non-specific lipid-transfer protein Lac s 1 from Lactuca sativa (Garden lettuce).